The following is a 156-amino-acid chain: SsrA-binding protein (156 aa).

The protein belongs to the SmpB family.

The protein localises to the cytoplasm. Required for rescue of stalled ribosomes mediated by trans-translation. Binds to transfer-messenger RNA (tmRNA), required for stable association of tmRNA with ribosomes. tmRNA and SmpB together mimic tRNA shape, replacing the anticodon stem-loop with SmpB. tmRNA is encoded by the ssrA gene; the 2 termini fold to resemble tRNA(Ala) and it encodes a 'tag peptide', a short internal open reading frame. During trans-translation Ala-aminoacylated tmRNA acts like a tRNA, entering the A-site of stalled ribosomes, displacing the stalled mRNA. The ribosome then switches to translate the ORF on the tmRNA; the nascent peptide is terminated with the 'tag peptide' encoded by the tmRNA and targeted for degradation. The ribosome is freed to recommence translation, which seems to be the essential function of trans-translation. Required for trans-translation. Probably required for sporulation; deletion of the gene for tmRNA impairs sporulation via its effect on trans-translation, and as smpB is required for trans-translation under non-stress conditions, it is also probably required during sporulation. This Bacillus subtilis (strain 168) protein is SsrA-binding protein.